Here is a 1274-residue protein sequence, read N- to C-terminus: Mediator of RNA polymerase II transcription subunit 14 (1274 aa).

3 disordered regions span residues 1–40, 1056–1142, and 1155–1274; these read MENGHMNGVRTHHDRNSWTNGVNGGVAKREGSPDKGKAHA, LVGT…LHTQ, and AQRQ…VVID. Positions 27 to 37 are enriched in basic and acidic residues; it reads AKREGSPDKGK. Polar residues predominate over residues 1075–1085; sequence QDLQQGPQKTP. A compositionally biased stretch (low complexity) spans 1090 to 1104; it reads AAQAAQAAQAAQAAQ. Residues 1108-1119 are compositionally biased toward pro residues; the sequence is PQRPKQQPPTPS. Low complexity-rich tracts occupy residues 1120–1142, 1155–1172, and 1183–1252; these read QPQQQHRNVNQPQAQAQPQLHTQ, AQRQAQARANNSSNNNNT, and PQQR…PQGQ. Over residues 1253 to 1265 the composition is skewed to gly residues; it reads PGHGGGANGGMGG.

The protein belongs to the Mediator complex subunit 14 family. Component of the Mediator complex.

It localises to the nucleus. Its function is as follows. Component of the Mediator complex, a coactivator involved in the regulated transcription of nearly all RNA polymerase II-dependent genes. Mediator functions as a bridge to convey information from gene-specific regulatory proteins to the basal RNA polymerase II transcription machinery. Mediator is recruited to promoters by direct interactions with regulatory proteins and serves as a scaffold for the assembly of a functional preinitiation complex with RNA polymerase II and the general transcription factors. The protein is Mediator of RNA polymerase II transcription subunit 14 (rgr1) of Neurospora crassa (strain ATCC 24698 / 74-OR23-1A / CBS 708.71 / DSM 1257 / FGSC 987).